Here is a 292-residue protein sequence, read N- to C-terminus: Malonyl-S-ACP:biotin-protein carboxyltransferase MADD (292 aa).

Positions 1 to 281 (MEIMMGQGRL…RGKVMAMMDK (281 aa)) constitute a CoA carboxyltransferase C-terminal domain.

The protein localises to the cytoplasm. It catalyses the reaction N(6)-biotinyl-L-lysyl-[protein] + malonyl-[ACP] = N(6)-carboxybiotinyl-L-lysyl-[protein] + acetyl-[ACP]. In terms of biological role, gamma subunit of the biotin-dependent malonate decarboxylase multienzyme complex (EC 7.2.4.4). The two subunits MADC and MADD are required for the transfer of the malonate carboxy group from the acyl-carrier protein (ACP) to the prosthetic group of the biotin carrier MADF. Required for the regeneration of ACP. This Malonomonas rubra protein is Malonyl-S-ACP:biotin-protein carboxyltransferase MADD (madD).